The sequence spans 401 residues: Argininosuccinate synthase (401 aa).

8–16 (AYSGGLDTS) is an ATP binding site. L-citrulline is bound at residue Y85. G115 lines the ATP pocket. T117, N121, and D122 together coordinate L-aspartate. Position 121 (N121) interacts with L-citrulline. L-citrulline-binding residues include R125, S173, E258, and Y270.

It belongs to the argininosuccinate synthase family. Type 1 subfamily. As to quaternary structure, homotetramer.

The protein resides in the cytoplasm. It carries out the reaction L-citrulline + L-aspartate + ATP = 2-(N(omega)-L-arginino)succinate + AMP + diphosphate + H(+). It participates in amino-acid biosynthesis; L-arginine biosynthesis; L-arginine from L-ornithine and carbamoyl phosphate: step 2/3. This Staphylococcus aureus (strain bovine RF122 / ET3-1) protein is Argininosuccinate synthase.